The primary structure comprises 150 residues: L-alanine exporter AlaE (150 aa).

The next 4 membrane-spanning stretches (helical) occupy residues Phe17–Met37, Leu48–Leu68, Leu86–Ala106, and Ile111–Tyr131.

This sequence belongs to the AlaE exporter family.

The protein localises to the cell inner membrane. Exports L-alanine. The protein is L-alanine exporter AlaE of Aliivibrio fischeri (strain ATCC 700601 / ES114) (Vibrio fischeri).